The chain runs to 72 residues: Translation initiation factor IF-1 (72 aa).

Residues 1–72 form the S1-like domain; it reads MAREDHIEME…SKGRIVYRAR (72 aa).

It belongs to the IF-1 family. Component of the 30S ribosomal translation pre-initiation complex which assembles on the 30S ribosome in the order IF-2 and IF-3, IF-1 and N-formylmethionyl-tRNA(fMet); mRNA recruitment can occur at any time during PIC assembly.

The protein resides in the cytoplasm. Its function is as follows. One of the essential components for the initiation of protein synthesis. Stabilizes the binding of IF-2 and IF-3 on the 30S subunit to which N-formylmethionyl-tRNA(fMet) subsequently binds. Helps modulate mRNA selection, yielding the 30S pre-initiation complex (PIC). Upon addition of the 50S ribosomal subunit IF-1, IF-2 and IF-3 are released leaving the mature 70S translation initiation complex. The protein is Translation initiation factor IF-1 of Chromohalobacter salexigens (strain ATCC BAA-138 / DSM 3043 / CIP 106854 / NCIMB 13768 / 1H11).